The sequence spans 342 residues: Serpentine receptor class r-10 (342 aa).

The Extracellular segment spans residues 1-11 (MTGELWLTLVD). The chain crosses the membrane as a helical span at residues 12-32 (TADIVGFSMTFCVNIVLLFLL). Residues 33–38 (KNRGKN) lie on the Cytoplasmic side of the membrane. A helical transmembrane segment spans residues 39-59 (LGTYKHLMAFFSVFSIFYAII). Residues 60–92 (ESILRPIMHIENATFFLISRKRFNYSTRLGKIN) lie on the Extracellular side of the membrane. 2 N-linked (GlcNAc...) asparagine glycosylation sites follow: Asn-71 and Asn-83. Residues 93 to 113 (SAFYCACFATSFVVSGVHFVY) traverse the membrane as a helical segment. Over 114 to 131 (RFFASCKPHLLRSFNMPY) the chain is Cytoplasmic. The chain crosses the membrane as a helical span at residues 132-152 (LLLWPLGCSIPVMMWASVSYF). The Extracellular portion of the chain corresponds to 153-202 (LYPDTAFTEAAVTNVLNTHYHSIKKDNVSYIAYVYYQYDENGVRYVYLKN). N-linked (GlcNAc...) asparagine glycosylation occurs at Asn-179. The chain crosses the membrane as a helical span at residues 203 to 223 (LLGCFVHYFVMSATFVVMFIC). The Cytoplasmic portion of the chain corresponds to 224-257 (GYLTWKTMRKHKTASDRTRQLQKQLFKALVLQTL). Residues 258–278 (IPTIFMYAPTGVMFIAPFFSI) traverse the membrane as a helical segment. At 279-285 (NLNANAN) the chain is on the extracellular side. The chain crosses the membrane as a helical span at residues 286-306 (FIVFCSFLYPGLDPLILILII). Residues 307–342 (RDFRQTVFKFFCLRKKNSVDESRSTTRANMSQVATH) are Cytoplasmic-facing.

This sequence belongs to the nematode receptor-like protein str family. In terms of assembly, interacts with odr-4.

It is found in the cell projection. The protein resides in the cilium membrane. Its function is as follows. An odorant receptor which affects chemotaxis to the volatile odorant diacetyl. Specifies AWA neuronal cell fate via the odr-7 pathway. The chain is Serpentine receptor class r-10 from Caenorhabditis briggsae.